The sequence spans 570 residues: Urease subunit alpha (570 aa).

Residues 131–570 form the Urease domain; it reads GGFDAHIHFI…LPMAQRYFLF (440 aa). Ni(2+)-binding residues include histidine 136, histidine 138, and lysine 219. An N6-carboxylysine modification is found at lysine 219. Histidine 221 serves as a coordination point for substrate. Ni(2+) is bound by residues histidine 248 and histidine 274. Histidine 322 serves as the catalytic Proton donor. Aspartate 362 provides a ligand contact to Ni(2+).

Belongs to the metallo-dependent hydrolases superfamily. Urease alpha subunit family. In terms of assembly, heterotrimer of UreA (gamma), UreB (beta) and UreC (alpha) subunits. Three heterotrimers associate to form the active enzyme. The cofactor is Ni cation. Carboxylation allows a single lysine to coordinate two nickel ions.

It localises to the cytoplasm. It catalyses the reaction urea + 2 H2O + H(+) = hydrogencarbonate + 2 NH4(+). Its pathway is nitrogen metabolism; urea degradation; CO(2) and NH(3) from urea (urease route): step 1/1. The chain is Urease subunit alpha from Chelativorans sp. (strain BNC1).